We begin with the raw amino-acid sequence, 336 residues long: Glycerol-3-phosphate dehydrogenase [NAD(P)+] (336 aa).

5 residues coordinate NADPH: Ser14, Trp15, Arg35, Arg36, and Lys109. Residues Lys109 and Gly139 each coordinate sn-glycerol 3-phosphate. Ala143 is a binding site for NADPH. Lys194, Asp247, Ser257, Arg258, and Asn259 together coordinate sn-glycerol 3-phosphate. Lys194 serves as the catalytic Proton acceptor. Residue Arg258 coordinates NADPH. Glu284 is a binding site for NADPH.

The protein belongs to the NAD-dependent glycerol-3-phosphate dehydrogenase family.

It is found in the cytoplasm. It catalyses the reaction sn-glycerol 3-phosphate + NAD(+) = dihydroxyacetone phosphate + NADH + H(+). It carries out the reaction sn-glycerol 3-phosphate + NADP(+) = dihydroxyacetone phosphate + NADPH + H(+). Its pathway is membrane lipid metabolism; glycerophospholipid metabolism. In terms of biological role, catalyzes the reduction of the glycolytic intermediate dihydroxyacetone phosphate (DHAP) to sn-glycerol 3-phosphate (G3P), the key precursor for phospholipid synthesis. In Streptomyces avermitilis (strain ATCC 31267 / DSM 46492 / JCM 5070 / NBRC 14893 / NCIMB 12804 / NRRL 8165 / MA-4680), this protein is Glycerol-3-phosphate dehydrogenase [NAD(P)+].